Reading from the N-terminus, the 271-residue chain is Aminoglycoside 3'-phosphotransferase (271 aa).

The active-site Proton acceptor is the Asp198.

The protein belongs to the aminoglycoside phosphotransferase family.

It catalyses the reaction kanamycin A + ATP = kanamycin 3'-phosphate + ADP + H(+). Its function is as follows. Resistance to kanamycin and structurally-related aminoglycosides, including amikacin. This Escherichia coli protein is Aminoglycoside 3'-phosphotransferase (aphA1).